We begin with the raw amino-acid sequence, 150 residues long: Ribosomal RNA large subunit methyltransferase H (150 aa).

S-adenosyl-L-methionine is bound by residues L68, G97, and 116-121; that span reads LSAMTL.

Belongs to the RNA methyltransferase RlmH family. In terms of assembly, homodimer.

The protein localises to the cytoplasm. It catalyses the reaction pseudouridine(1915) in 23S rRNA + S-adenosyl-L-methionine = N(3)-methylpseudouridine(1915) in 23S rRNA + S-adenosyl-L-homocysteine + H(+). In terms of biological role, specifically methylates the pseudouridine at position 1915 (m3Psi1915) in 23S rRNA. This Prochlorococcus marinus (strain MIT 9303) protein is Ribosomal RNA large subunit methyltransferase H.